The following is a 529-amino-acid chain: PTS system alpha-glucoside-specific EIICB component (529 aa).

Positions 1–416 (MMKKVQRFGG…MDLKTPGRED (416 aa)) constitute a PTS EIIC type-1 domain. Helical transmembrane passes span 8 to 28 (FGGAMMAPVLLFAFTGIVVGL), 59 to 79 (GWTVFRQMPILFAIGLPISLA), 91 to 111 (FALYTTFNYFVAAILKVFYGI), 130 to 150 (VPTLDTNLFGGILIAALVVYL), 170 to 190 (VFVYIVGFVVMIPCAFLTVLI), 198 to 218 (ISALQGFMKASGIFGVWIYTF), 222 to 242 (ILIPTGLHHFVYTPFVFGPAA), 272 to 292 (GGFALHGNSKIFGAPGIALAM), 304 to 324 (VAALLIPIIFTAVISGITEPL), 328 to 348 (FLFIAPVLFAVHACLAATMAA), 352 to 372 (AFGVVGNMGGGLLDFFFLNWI), and 380 to 400 (GTVIAQIVIGLIFTAIYFVVF). Residues 450-529 (AQKGAIILEA…ERIEEMMKKG (80 aa)) enclose the PTS EIIB type-1 domain. Cys472 functions as the Phosphocysteine intermediate; for EIIB activity in the catalytic mechanism.

It is found in the cell membrane. Its function is as follows. The phosphoenolpyruvate-dependent sugar phosphotransferase system (sugar PTS), a major carbohydrate active -transport system, catalyzes the phosphorylation of incoming sugar substrates concomitantly with their translocation across the cell membrane. This system is probably involved in transport of the alpha-glucosides trehalulose, turanose, maltulose and palatinose. This chain is PTS system alpha-glucoside-specific EIICB component, found in Leptotrichia buccalis (strain ATCC 14201 / DSM 1135 / JCM 12969 / NCTC 10249 / C-1013-b).